We begin with the raw amino-acid sequence, 579 residues long: Arginine--tRNA ligase (579 aa).

Residues Pro-127–His-137 carry the 'HIGH' region motif.

Belongs to the class-I aminoacyl-tRNA synthetase family. As to quaternary structure, monomer.

It is found in the cytoplasm. The catalysed reaction is tRNA(Arg) + L-arginine + ATP = L-arginyl-tRNA(Arg) + AMP + diphosphate. This chain is Arginine--tRNA ligase, found in Azotobacter vinelandii (strain DJ / ATCC BAA-1303).